Here is a 919-residue protein sequence, read N- to C-terminus: Periodic tryptophan protein 2 homolog (919 aa).

WD repeat units lie at residues 12–50, 53–93, 94–132, 142–181, and 186–225; these read GTVY…SNTL, ATKY…LHHF, HFKG…REFN, GPYD…NLIY, and GHKD…EGLR. Lysine 55 is modified (N6-acetyllysine). Positions 238-266 are disordered; that stretch reads QREKEEEEEDEEEGDRETTIRGKTTPAEQ. Positions 242-252 are enriched in acidic residues; that stretch reads EEEEEDEEEGD. WD repeat units follow at residues 286 to 325, 328 to 368, 371 to 410, 413 to 452, 456 to 498, 499 to 538, 541 to 580, 603 to 642, and 700 to 740; these read GDFN…LIHS, ISDQ…YVLK, GHFN…CFVT, EHSS…NFRT, PRPT…DVLS, GHEG…RTKE, TLTS…QVGS, AKGK…LVKR, and KPEI…DPFE. The segment at 885 to 919 is disordered; the sequence is TLEPVDTEEDSDASDEDSLHLLRAAGEEEEEEMLI. The segment covering 889-900 has biased composition (acidic residues); the sequence is VDTEEDSDASDE. Phosphothreonine is present on threonine 891. 3 positions are modified to phosphoserine: serine 895, serine 898, and serine 902.

Belongs to the WD repeat PWP2 family. As to quaternary structure, part of the small subunit (SSU) processome, composed of more than 70 proteins and the RNA chaperone small nucleolar RNA (snoRNA) U3.

It is found in the nucleus. Its subcellular location is the nucleolus. Its function is as follows. Part of the small subunit (SSU) processome, first precursor of the small eukaryotic ribosomal subunit. During the assembly of the SSU processome in the nucleolus, many ribosome biogenesis factors, an RNA chaperone and ribosomal proteins associate with the nascent pre-rRNA and work in concert to generate RNA folding, modifications, rearrangements and cleavage as well as targeted degradation of pre-ribosomal RNA by the RNA exosome. In Mus musculus (Mouse), this protein is Periodic tryptophan protein 2 homolog (Pwp2).